Consider the following 259-residue polypeptide: Electron transfer flavoprotein subunit beta (259 aa).

Belongs to the ETF beta-subunit/FixA family. In terms of assembly, heterodimer of an alpha and a beta subunit. FAD serves as cofactor. The cofactor is AMP.

Functionally, the electron transfer flavoprotein serves as a specific electron acceptor for other dehydrogenases. It transfers the electrons to the main respiratory chain via ETF-ubiquinone oxidoreductase (ETF dehydrogenase). This is Electron transfer flavoprotein subunit beta (etfB) from Clostridium acetobutylicum (strain ATCC 824 / DSM 792 / JCM 1419 / IAM 19013 / LMG 5710 / NBRC 13948 / NRRL B-527 / VKM B-1787 / 2291 / W).